The chain runs to 507 residues: MAAELVEAKNMVMSFRVSDLQMLLGFVGRSKSGLKHELVTRALQLVQFDCSPELFKKIKELYETRYAKKSAEPGPQAPRPLDPLALHSMPRTPLSGPTVDYPVLYGKYLNGLGRLPTKTLKPEVRLVKLPFFNMLDELLKPTELVPQSAEKLQESPCIFALTPRQVEMIRNSRELQPGVKAVQVVLRICYSDTSCPQEDQYPPNIAVKVNHSYCSVPGYYPSNKPGVEPKRPCRPINLTHLMYLSSATNRITVTWGNYGKSYSVALYLVRQLTSSDLLQRLKTIGVKHPELCKALVKEKLRLDPDSEIATTGVRVSLICPLVKMRLSVPCRAETCAHLQCFDAVFYLQMNEKKPTWMCPVCDKPAAYDQLIIDGLLSKILSECEGADEIEFLAEGSWRPIRAEKEPSCSPQGPILVLGTSDANGLAPASSTPGIGSGLSGPGSAGSGAGAAGSLENGKTGADVVDLTLDSSSSSEDEDEDEDDDEDEDEGPRPKRRCPFQKGLVPAC.

A2 carries the N-acetylalanine modification. A Glycyl lysine isopeptide (Lys-Gly) (interchain with G-Cter in SUMO2) cross-link involves residue K9. In terms of domain architecture, SAP spans 12–46; that stretch reads VMSFRVSDLQMLLGFVGRSKSGLKHELVTRALQLV. The LXXLL motif motif lies at 20–24; the sequence is LQMLL. K35 participates in a covalent cross-link: Glycyl lysine isopeptide (Lys-Gly) (interchain with G-Cter in SUMO); alternate. K35 is covalently cross-linked (Glycyl lysine isopeptide (Lys-Gly) (interchain with G-Cter in SUMO2); alternate). Residues K56, K59, K68, and K69 each participate in a glycyl lysine isopeptide (Lys-Gly) (interchain with G-Cter in SUMO2) cross-link. The residue at position 107 (K107) is an N6-acetyllysine. Residues 112-272 enclose the PINIT domain; that stretch reads LGRLPTKTLK…SVALYLVRQL (161 aa). K118 participates in a covalent cross-link: Glycyl lysine isopeptide (Lys-Gly) (interchain with G-Cter in SUMO2). K128 participates in a covalent cross-link: Glycyl lysine isopeptide (Lys-Gly) (interchain with G-Cter in SUMO). An SP-RING-type zinc finger spans residues 304 to 385; that stretch reads PDSEIATTGV…LSKILSECEG (82 aa). Zn(2+)-binding residues include C335, H337, C358, and C361. The disordered stretch occupies residues 426 to 507; the sequence is APASSTPGIG…PFQKGLVPAC (82 aa). Residues 434-450 are compositionally biased toward gly residues; it reads IGSGLSGPGSAGSGAGA. A compositionally biased stretch (acidic residues) spans 474–489; that stretch reads SEDEDEDEDDDEDEDE.

This sequence belongs to the PIAS family. Interacts with AR, GATA2, LEF1, TP53 and STAT1 (IFNG-induced). Interacts with TICAM1. Interacts with MTA1. Interacts with PRDM1/Blimp-1. Interacts with TRIM32 upon treatment with UVB and TNF-alpha. In terms of assembly, (Microbial infection) Interacts ewith Moloney murine leukemia virus Capsid protein p30. Sumoylated. Lys-35 is the main site of sumoylation. Sumoylation is required for TCF4 sumoylation and transcriptional activation. Represses LEF1 transcriptional activity. SUMO1 is the preferred conjugate. In terms of processing, ubiquitinated by TRIM32 upon treatment with UVB and TNF-alpha. In terms of tissue distribution, widely expressed, with highest levels in testis. Also expressed in vascular endothelial cells, in primary keratinocytes and in the CNS, including cortex, olfactory bulb, spinal cord, thalamus and trigeminal ganglion. Low expression, if any, in liver and lung.

The protein resides in the nucleus. It localises to the PML body. The catalysed reaction is S-ubiquitinyl-[E2 ubiquitin-conjugating enzyme]-L-cysteine + [acceptor protein]-L-lysine = [E2 ubiquitin-conjugating enzyme]-L-cysteine + N(6)-ubiquitinyl-[acceptor protein]-L-lysine.. The protein operates within protein modification; protein sumoylation. Functionally, functions as an E3-type small ubiquitin-like modifier (SUMO) ligase, stabilizing the interaction between UBE2I and the substrate, and as a SUMO-tethering factor. Mediates sumoylation of ALKBH5, AXIN1, CEBPA, KLF8, GATA2, PARK7, HERC2, MYB, TCF4 and RNF168. Plays a crucial role as a transcriptional coregulation in various cellular pathways, including the STAT pathway, the p53/TP53 pathway, the Wnt pathway and the steroid hormone signaling pathway. Involved in gene silencing. In Wnt signaling, represses LEF1 and enhances TCF4 transcriptional activities through promoting their sumoylations. Enhances the sumoylation of MTA1 and may participate in its paralog-selective sumoylation. Binds to AT-rich DNA sequences, known as matrix or scaffold attachment regions (MARs/SARs). Catalyzes conjugation of SUMO2 to KAT5 in response to DNA damage, facilitating repair of DNA double-strand breaks (DSBs) via homologous recombination (HR). Mediates sumoylation of PARP1 in response to PARP1 trapping to chromatin. Mediates sumoylation of KLF8, repressiing KLF8 transcriptional activity and cell cycle progression into G(1) phase. Sumoylates ALKBH5 downstream of MAPK8/JNK1 and MAPK9/JNK2 in response to reactive oxygen species (ROS), inhibiting ALKBH5 RNA demethylase activity. The chain is E3 SUMO-protein ligase PIAS4 (Pias4) from Mus musculus (Mouse).